Reading from the N-terminus, the 128-residue chain is Small ribosomal subunit protein bS6 (128 aa).

The protein belongs to the bacterial ribosomal protein bS6 family.

In terms of biological role, binds together with bS18 to 16S ribosomal RNA. The chain is Small ribosomal subunit protein bS6 from Geotalea uraniireducens (strain Rf4) (Geobacter uraniireducens).